We begin with the raw amino-acid sequence, 466 residues long: MTQTLYDKLMNAHVIRRDNSTELIYIDRQLIHEVTSPQAFEGLAIAGRKPWSTSANLAVPDHNVPTTNRSSGINGISDPISKLQIETLDKNCKTFGINEIPMNDIRQGIVHVVGPEQGFTLPGMSIVCGDSHTSTHGALGALAFGIGTSEVEHVLATGCLWQSKSKNFNIEVSGKLNKHVSAKDIALYIIGKIGTAGGTGHAIEFSGDTIQSLSIEGRMTLCNMAIEAGARVGMVAVDDKTIDYVKGRILAPSGAKWSKAVEYWHTLHSDKNAHFEKIAHFNAKDIKPQVTWGTSPEMVITIDGYIPNPANAKNHTEKVSWENALNYMQLTADIKISDIKIDKVFIGSCTNSRIEDLRIVASVLKDKKIANNIKLALVVPGSGLIKKQAEKEGLDKIFINSGFEWREAGCSMCLAMNADKLKVGERCISTSNRNFEGRQGQGSFTHLVSPAIAAASAITGHFSEVK.

Residues Cys-349, Cys-410, and Cys-413 each coordinate [4Fe-4S] cluster.

It belongs to the aconitase/IPM isomerase family. LeuC type 1 subfamily. As to quaternary structure, heterodimer of LeuC and LeuD. It depends on [4Fe-4S] cluster as a cofactor.

The enzyme catalyses (2R,3S)-3-isopropylmalate = (2S)-2-isopropylmalate. It functions in the pathway amino-acid biosynthesis; L-leucine biosynthesis; L-leucine from 3-methyl-2-oxobutanoate: step 2/4. Its function is as follows. Catalyzes the isomerization between 2-isopropylmalate and 3-isopropylmalate, via the formation of 2-isopropylmaleate. This is 3-isopropylmalate dehydratase large subunit from Ruthia magnifica subsp. Calyptogena magnifica.